We begin with the raw amino-acid sequence, 779 residues long: FAD-dependent monooxygenase BOA8 (779 aa).

The FAD site is built by glutamate 85, arginine 128, aspartate 331, and alanine 344. 7 helical membrane-spanning segments follow: residues 471–491 (AQLA…KTPE), 504–524 (VKLD…IWTI), 542–562 (AFLL…YFFF), 587–607 (ILPL…WSSI), 618–638 (NAWY…KFIV), 665–685 (ILIC…SIAF), and 742–762 (LILT…GLIV).

The protein belongs to the paxM FAD-dependent monooxygenase family. Requires FAD as cofactor.

It is found in the membrane. It participates in polyketide biosynthesis. Functionally, FAD-dependent monooxygenase; part of the gene cluster B that mediates the biosynthesis of botcinic acid and its botcinin derivatives, acetate-derived polyketides that contribute to virulence when combined with the sesquiterpene botrydial. Botcinic acid and its derivatives have been shown to induce chlorosis and necrosis during host plant infection, but also have antifungal activities. Two polyketide synthases, BOA6 and BOA9, are involved in the biosynthesis of botcinins. BOA6 mediates the formation of the per-methylated tetraketide core by condensation of four units of malonyl-CoA with one unit of acetyl-CoA, which would be methylated in activated methylene groups to yield a bicyclic acid intermediate that could then either be converted to botrylactone derivatives or lose the starter acetate unit through a retro-Claisen type C-C bond cleavage to yield botcinin derivatives. The second polyketide synthase, BOA9, is probably required for the biosynthesis of the tetraketide side chain of botcinins. The methyltransferase (MT) domain within BOA6 is probably responsible for the incorporation of four methyl groups. The trans-enoyl reductase BOA5 might take over the enoyl reductase function of BOA6 that misses an ER domain. The monooxygenases BOA2, BOA3 and BOA4 might be involved in further hydroxylations at C4, C5 and C8, whereas BOA7, close to BOA9, could potentially be involved in the hydroxylation at C4 in the side chain of botcinins. The chain is FAD-dependent monooxygenase BOA8 from Botryotinia fuckeliana (strain B05.10) (Noble rot fungus).